The sequence spans 176 residues: Isopentenyl-diphosphate Delta-isomerase (176 aa).

The Mn(2+) site is built by histidine 22 and histidine 28. One can recognise a Nudix hydrolase domain in the interval leucine 26–isoleucine 160. Cysteine 62 is an active-site residue. Histidine 64 lines the Mn(2+) pocket. Position 82 (glutamate 82) interacts with Mg(2+). Mn(2+)-binding residues include glutamate 108 and glutamate 110. The active site involves glutamate 110.

It belongs to the IPP isomerase type 1 family. It depends on Mg(2+) as a cofactor. Mn(2+) is required as a cofactor.

The protein localises to the cytoplasm. The enzyme catalyses isopentenyl diphosphate = dimethylallyl diphosphate. Its pathway is isoprenoid biosynthesis; dimethylallyl diphosphate biosynthesis; dimethylallyl diphosphate from isopentenyl diphosphate: step 1/1. It participates in porphyrin-containing compound metabolism; chlorophyll biosynthesis. Catalyzes the 1,3-allylic rearrangement of the homoallylic substrate isopentenyl (IPP) to its highly electrophilic allylic isomer, dimethylallyl diphosphate (DMAPP). The protein is Isopentenyl-diphosphate Delta-isomerase of Dinoroseobacter shibae (strain DSM 16493 / NCIMB 14021 / DFL 12).